A 232-amino-acid chain; its full sequence is Phosphatidylserine decarboxylase proenzyme (232 aa).

The Schiff-base intermediate with substrate; via pyruvic acid role is filled by S190. S190 is subject to Pyruvic acid (Ser); by autocatalysis.

It belongs to the phosphatidylserine decarboxylase family. PSD-A subfamily. As to quaternary structure, heterodimer of a large membrane-associated beta subunit and a small pyruvoyl-containing alpha subunit. The cofactor is pyruvate. Is synthesized initially as an inactive proenzyme. Formation of the active enzyme involves a self-maturation process in which the active site pyruvoyl group is generated from an internal serine residue via an autocatalytic post-translational modification. Two non-identical subunits are generated from the proenzyme in this reaction, and the pyruvate is formed at the N-terminus of the alpha chain, which is derived from the carboxyl end of the proenzyme. The post-translation cleavage follows an unusual pathway, termed non-hydrolytic serinolysis, in which the side chain hydroxyl group of the serine supplies its oxygen atom to form the C-terminus of the beta chain, while the remainder of the serine residue undergoes an oxidative deamination to produce ammonia and the pyruvoyl prosthetic group on the alpha chain.

The protein localises to the cell membrane. The enzyme catalyses a 1,2-diacyl-sn-glycero-3-phospho-L-serine + H(+) = a 1,2-diacyl-sn-glycero-3-phosphoethanolamine + CO2. It participates in phospholipid metabolism; phosphatidylethanolamine biosynthesis; phosphatidylethanolamine from CDP-diacylglycerol: step 2/2. In terms of biological role, catalyzes the formation of phosphatidylethanolamine (PtdEtn) from phosphatidylserine (PtdSer). In Bradyrhizobium diazoefficiens (strain JCM 10833 / BCRC 13528 / IAM 13628 / NBRC 14792 / USDA 110), this protein is Phosphatidylserine decarboxylase proenzyme.